A 599-amino-acid polypeptide reads, in one-letter code: MKNIRNFSIIAHIDHGKSTLSDRIIQICGGLSDREMEAQVLDSMDLERERGITIKAQSVTLDYKASDGETYQLNFIDTPGHVDFSYEVSRSLAACEGALLVVDAGQGVEAQTLANCYTAMEMDLEVVPVLNKIDLPAADPERVAEEIEDIVGIDATDAVRCSAKTGVGVQDVLERLVRDIPPPEGDPEGPLQALIIDSWFDNYLGVVSLIRIKNGTLRKGDKVKVMSTGQTYNADRLGIFTPKQVDRTELKCGEVGWLVCAIKDIHGAPVGDTLTLARNPAEKVLPGFKKVKPQVYAGLFPVSSDDYEAFRDALGKLSLNDASLFYEPESSSALGFGFRCGFLGLLHMEIIQERLEREYDLDLITTAPTVVYEVETTSREVIYVDSPSKLPAVNNIYELREPIAECHMLLPQAYLGNVITLCVEKRGVQTNMVYHGNQVALTYEIPMAEVVLDFFDRLKSTSRGYASLDYNFKRFQASDMVRVDVLINGERVDALALITHRDNSQNRGRELVEKMKDLIPRQQFDIAIQAAIGTHIIARSTVKQLRKNVLAKCYGGDISRKKKLLQKQKEGKKRMKQIGNVELPQEAFLAILHVGKDNK.

In terms of domain architecture, tr-type G spans 2-184 (KNIRNFSIIA…RLVRDIPPPE (183 aa)). GTP contacts are provided by residues 14–19 (DHGKST) and 131–134 (NKID).

The protein belongs to the TRAFAC class translation factor GTPase superfamily. Classic translation factor GTPase family. LepA subfamily.

It localises to the cell inner membrane. The catalysed reaction is GTP + H2O = GDP + phosphate + H(+). Functionally, required for accurate and efficient protein synthesis under certain stress conditions. May act as a fidelity factor of the translation reaction, by catalyzing a one-codon backward translocation of tRNAs on improperly translocated ribosomes. Back-translocation proceeds from a post-translocation (POST) complex to a pre-translocation (PRE) complex, thus giving elongation factor G a second chance to translocate the tRNAs correctly. Binds to ribosomes in a GTP-dependent manner. The sequence is that of Elongation factor 4 from Shigella dysenteriae serotype 1 (strain Sd197).